The primary structure comprises 126 residues: Histone H2B.5 (126 aa).

The span at 1-27 (MAPKAEKKPSEKAPKADKKITKEGGSE) shows a compositional bias: basic and acidic residues. A disordered region spans residues 1–34 (MAPKAEKKPSEKAPKADKKITKEGGSERKKKTKK). N,N,N-trimethylalanine; alternate is present on Ala-2. Ala-2 carries the post-translational modification N,N-dimethylalanine; alternate. Ala-2 is modified (N-methylalanine; alternate). At Lys-4 the chain carries N6-methyllysine. Residues Lys-7, Lys-12, Lys-18, and Lys-19 each carry the N6-acetyllysine modification. Residue Lys-122 forms a Glycyl lysine isopeptide (Lys-Gly) (interchain with G-Cter in ubiquitin) linkage.

The protein belongs to the histone H2B family. The nucleosome is a histone octamer containing two molecules each of H2A, H2B, H3 and H4 assembled in one H3-H4 heterotetramer and two H2A-H2B heterodimers. The octamer wraps approximately 147 bp of DNA. Post-translationally, can be acetylated to form H2BK6ac, H2BK33ac and H2BK34ac. In terms of processing, monoubiquitinated by BRE1 to form H2BK143ub1 and deubiquitinated by UBP26. Required for heterochromatic histone H3 di- and trimethylation at H3K4me. May give a specific tag for epigenetic transcriptional activation.

It localises to the nucleus. It is found in the chromosome. Core component of nucleosome. Nucleosomes wrap and compact DNA into chromatin, limiting DNA accessibility to the cellular machineries which require DNA as a template. Histones thereby play a central role in transcription regulation, DNA repair, DNA replication and chromosomal stability. DNA accessibility is regulated via a complex set of post-translational modifications of histones, also called histone code, and nucleosome remodeling. The chain is Histone H2B.5 from Arabidopsis thaliana (Mouse-ear cress).